We begin with the raw amino-acid sequence, 188 residues long: dCTP deaminase (188 aa).

DCTP is bound by residues 111-116, 135-137, glutamine 156, tyrosine 170, lysine 179, and glutamine 180; these read KSTYAR and TLE. The active-site Proton donor/acceptor is glutamate 137.

The protein belongs to the dCTP deaminase family. In terms of assembly, homotrimer.

It carries out the reaction dCTP + H2O + H(+) = dUTP + NH4(+). The protein operates within pyrimidine metabolism; dUMP biosynthesis; dUMP from dCTP (dUTP route): step 1/2. Catalyzes the deamination of dCTP to dUTP. The sequence is that of dCTP deaminase from Rickettsia africae (strain ESF-5).